The sequence spans 389 residues: MKWLVILGLVALSECLVIIPLTKVKSIRENLREKDLLLNFLKEHPYNMIQKFGLKGSLCSPKISCLRLWNYLDMVYVGNITIGTPPQLFSVIFDTASSDLWVPSNQCHSRACVTHRSFNPTLSSTFQSSNRTVKLAPHSGLVSGLLGYDTVQIGRFKSENQAFGLSQSEPVKELENAFFDGVLGLGYPSLAIQGTTPVFDNLRKQGQIPEPVFALYLSTNTKKGSVLMIGGVDNNFFTGNLKWVPLSARNYWQITLDRITWRGVVVGCTRGCQAILDSGSAFLLGPSRQISSIQKIIQARFIENEYQVRCCARTTLADFIFTINNVQYPVPARAYIRKGSTPRRCYSNFSGGTESLGKEETWILGEVFLRLYFTVFDRGQNRIGLRIAV.

Residues 1 to 15 (MKWLVILGLVALSEC) form the signal peptide. The region spanning 76-386 (YVGNITIGTP…DRGQNRIGLR (311 aa)) is the Peptidase A1 domain. N79 is a glycosylation site (N-linked (GlcNAc...) asparagine). The active site involves D94. Cysteines 107 and 112 form a disulfide. N130 is a glycosylation site (N-linked (GlcNAc...) asparagine). A disulfide bridge connects residues C268 and C272. The active site involves D277. Residues C311 and C345 are joined by a disulfide bond. N-linked (GlcNAc...) asparagine glycosylation is present at N348.

Belongs to the peptidase A1 family. In terms of tissue distribution, expressed throughout the chorion, with the signal localized exclusively over the trophectoderm.

Its subcellular location is the secreted. The protein localises to the extracellular space. Its function is as follows. Appears to be proteolytically inactive. In Sus scrofa (Pig), this protein is Pregnancy-associated glycoprotein 1.